The following is a 786-amino-acid chain: Spermatogenesis-associated protein 20 (786 aa).

The signal sequence occupies residues Met-1–Ala-22. Positions Ala-23–Val-61 are disordered. Position 649 is a phosphoserine (Ser-649).

It localises to the secreted. May play a role in fertility regulation. The chain is Spermatogenesis-associated protein 20 (SPATA20) from Homo sapiens (Human).